Here is a 190-residue protein sequence, read N- to C-terminus: Small ribosomal subunit protein uS4 (190 aa).

The region spanning 106 to 178 is the S4 RNA-binding domain; sequence RRLQTVVFKH…GRVKRVKRNA (73 aa). The segment at 166-190 is disordered; that stretch reads GRPGRVKRVKRNAAKKGSGGGDDDE. The span at 169 to 179 shows a compositional bias: basic residues; the sequence is GRVKRVKRNAA.

This sequence belongs to the universal ribosomal protein uS4 family.

The chain is Small ribosomal subunit protein uS4 from Trypanosoma brucei brucei.